We begin with the raw amino-acid sequence, 525 residues long: DEAD-box ATP-dependent RNA helicase CshA (525 aa).

Residues 2–30 carry the Q motif motif; that stretch reads TTFRELGLSDSLLQSVESMGFEEATPIQA. The 171-residue stretch at 33-203 folds into the Helicase ATP-binding domain; it reads IPHALQGKDI…ERFMTEPQHI (171 aa). 46–53 is an ATP binding site; it reads AQTGTGKT. The DEAD box motif lies at 151–154; it reads DEAD. Residues 214–374 form the Helicase C-terminal domain; sequence NIQQFYLEVQ…RMDAPTLDEA (161 aa). The tract at residues 428 to 525 is disordered; that stretch reads TTPIALTSEP…RKHHSRKPQA (98 aa). A compositionally biased stretch (basic and acidic residues) spans 458–503; that stretch reads DGNRNRSRDGRGGDGRNRDRNRDGRNRDGNRDRNRDGGNRGRRGEG. Over residues 515–525 the composition is skewed to basic residues; sequence ERKHHSRKPQA.

The protein belongs to the DEAD box helicase family. CshA subfamily. As to quaternary structure, oligomerizes, may be a member of the RNA degradosome.

The protein localises to the cytoplasm. It catalyses the reaction ATP + H2O = ADP + phosphate + H(+). DEAD-box RNA helicase possibly involved in RNA degradation. Unwinds dsRNA in both 5'- and 3'-directions, has RNA-dependent ATPase activity. The polypeptide is DEAD-box ATP-dependent RNA helicase CshA (Bacillus cereus (strain ATCC 10987 / NRS 248)).